A 568-amino-acid chain; its full sequence is Urease subunit alpha (568 aa).

Residues 131-568 (GGIDTHIHFI…LPMAQRYFLF (438 aa)) form the Urease domain. Residues H136, H138, and K219 each coordinate Ni(2+). K219 is modified (N6-carboxylysine). Position 221 (H221) interacts with substrate. Ni(2+) is bound by residues H248 and H274. H322 serves as the catalytic Proton donor. D362 contacts Ni(2+).

Belongs to the metallo-dependent hydrolases superfamily. Urease alpha subunit family. In terms of assembly, heterotrimer of UreA (gamma), UreB (beta) and UreC (alpha) subunits. Three heterotrimers associate to form the active enzyme. The cofactor is Ni cation. Post-translationally, carboxylation allows a single lysine to coordinate two nickel ions.

It is found in the cytoplasm. The catalysed reaction is urea + 2 H2O + H(+) = hydrogencarbonate + 2 NH4(+). It participates in nitrogen metabolism; urea degradation; CO(2) and NH(3) from urea (urease route): step 1/1. The polypeptide is Urease subunit alpha (Trichormus variabilis (strain ATCC 29413 / PCC 7937) (Anabaena variabilis)).